A 510-amino-acid polypeptide reads, in one-letter code: NAD(P)H-quinone oxidoreductase subunit 2 B, chloroplastic (510 aa).

A run of 13 helical transmembrane segments spans residues 24–44 (LLLF…GLIL), 57–77 (IPWL…ALLF), 99–119 (IFQF…VEYI), 124–144 (MAIT…MFLC), 149–169 (LITI…LSGY), 183–203 (YLLM…WLYG), 227–247 (PGIS…LSPA), 295–315 (WHLL…LIAI), 323–343 (MLAY…IVGD), 354–374 (YMLF…LFGL), 395–415 (ALSL…AGFF), 418–438 (LYLF…IGLL), and 484–504 (MIVC…IIAI).

This sequence belongs to the complex I subunit 2 family. In terms of assembly, NDH is composed of at least 16 different subunits, 5 of which are encoded in the nucleus.

The protein localises to the plastid. The protein resides in the chloroplast thylakoid membrane. The catalysed reaction is a plastoquinone + NADH + (n+1) H(+)(in) = a plastoquinol + NAD(+) + n H(+)(out). The enzyme catalyses a plastoquinone + NADPH + (n+1) H(+)(in) = a plastoquinol + NADP(+) + n H(+)(out). Functionally, NDH shuttles electrons from NAD(P)H:plastoquinone, via FMN and iron-sulfur (Fe-S) centers, to quinones in the photosynthetic chain and possibly in a chloroplast respiratory chain. The immediate electron acceptor for the enzyme in this species is believed to be plastoquinone. Couples the redox reaction to proton translocation, and thus conserves the redox energy in a proton gradient. The chain is NAD(P)H-quinone oxidoreductase subunit 2 B, chloroplastic from Helianthus annuus (Common sunflower).